A 616-amino-acid chain; its full sequence is Chaperone protein DnaK (616 aa).

The residue at position 174 (threonine 174) is a Phosphothreonine; by autocatalysis. The segment at 575 to 616 is disordered; it reads QQTQGAQSDPGAAGFGGQQEAPGAGQDENVVDADYKVVDDDK. The segment covering 607 to 616 has biased composition (basic and acidic residues); sequence ADYKVVDDDK.

The protein belongs to the heat shock protein 70 family.

Acts as a chaperone. In Ruminiclostridium cellulolyticum (strain ATCC 35319 / DSM 5812 / JCM 6584 / H10) (Clostridium cellulolyticum), this protein is Chaperone protein DnaK.